The chain runs to 256 residues: Astacin-like metalloprotease toxin 2 (256 aa).

A signal peptide spans 1–24 (MIPDVGFLVLLTGALFICIKAAPA). Residues 25–52 (TTDVDPTFEGRIVMEGDILIREEQLTER) constitute a propeptide that is removed on maturation. The Peptidase M12A domain maps to 53–250 (NAIALENMRW…KKINTLYNCP (198 aa)). 2 cysteine pairs are disulfide-bonded: cysteine 94–cysteine 249 and cysteine 117–cysteine 136. Histidine 144 contributes to the Zn(2+) binding site. The active site involves glutamate 145. Residues histidine 148 and histidine 154 each contribute to the Zn(2+) site.

As to quaternary structure, monomer. Requires Zn(2+) as cofactor. Expressed by the venom gland.

It is found in the secreted. Its activity is regulated as follows. Inhibited by 1,10-phenanthroline. Zinc metalloprotease. Provoques deadhesion of endothelial cells from cell cultures, and also degradation of fibronectin, fibrinogen and gelatin in vitro. Its role in the venom is not fully understood but it might act as a spreading factor that facilitates diffusion of other venom toxins. Alternatively, it might be involved in the proteolytic processing of other venom toxins or it might play a role in extra-oral digestion of prey. In Loxosceles intermedia (Brown spider), this protein is Astacin-like metalloprotease toxin 2.